The following is a 419-amino-acid chain: Gamma-glutamyl phosphate reductase (419 aa).

Belongs to the gamma-glutamyl phosphate reductase family.

The protein localises to the cytoplasm. It catalyses the reaction L-glutamate 5-semialdehyde + phosphate + NADP(+) = L-glutamyl 5-phosphate + NADPH + H(+). It functions in the pathway amino-acid biosynthesis; L-proline biosynthesis; L-glutamate 5-semialdehyde from L-glutamate: step 2/2. In terms of biological role, catalyzes the NADPH-dependent reduction of L-glutamate 5-phosphate into L-glutamate 5-semialdehyde and phosphate. The product spontaneously undergoes cyclization to form 1-pyrroline-5-carboxylate. In Nitratidesulfovibrio vulgaris (strain DP4) (Desulfovibrio vulgaris), this protein is Gamma-glutamyl phosphate reductase.